The chain runs to 260 residues: 3'-5' ssDNA/RNA exonuclease TatD (260 aa).

A divalent metal cation contacts are provided by Glu91, His127, and His152.

It belongs to the metallo-dependent hydrolases superfamily. TatD-type hydrolase family. TatD subfamily. In terms of assembly, monomer. Requires Mg(2+) as cofactor. The cofactor is Mn(2+).

It is found in the cytoplasm. Its function is as follows. 3'-5' exonuclease that prefers single-stranded DNA and RNA. May play a role in the H(2)O(2)-induced DNA damage repair. The protein is 3'-5' ssDNA/RNA exonuclease TatD of Escherichia coli (strain K12).